Here is a 600-residue protein sequence, read N- to C-terminus: Lamin-B2 (600 aa).

The head stretch occupies residues 2 to 27 (SGTPIRGTPGGTPLSPTRISRLQEKE). Position 16 is a phosphoserine; by CDK1 (Ser-16). In terms of domain architecture, IF rod spans 25 to 381 (EKEELRQLND…KLLEGEEERL (357 aa)). A coil 1A region spans residues 28–64 (ELRQLNDRLAVYIDRVRALELENDRLLVKISEKEEVT). The segment at 75–212 (YESELADARR…NVFEEEIRET (138 aa)) is coil 1B. Positions 237 to 379 (QALEDLRNQH…YRKLLEGEEE (143 aa)) are coil 2. Disordered regions lie at residues 377–449 (EEER…QMSQ) and 568–600 (ENEE…CLVM). Residues 380-600 (RLKLSPSPSS…RTTSRGCLVM (221 aa)) are tail. Over residues 383–410 (LSPSPSSRVTVSRATSSSSSSSTSLVRS) the composition is skewed to low complexity. Position 386 is a phosphoserine (Ser-386). Positions 414–419 (KRRRIE) match the Nuclear localization signal motif. In terms of domain architecture, LTD spans 445–562 (FQMSQQASAT…EEVAVRTVTK (118 aa)). The segment covering 569–583 (NEEEEDEADFGEEDL) has biased composition (acidic residues). Polar residues predominate over residues 584 to 600 (FNQQGDPRTTSRGCLVM). A Cysteine methyl ester modification is found at Cys-597. A lipid anchor (S-farnesyl cysteine) is attached at Cys-597. Positions 598-600 (LVM) are cleaved as a propeptide — removed in mature form.

Belongs to the intermediate filament family. As to quaternary structure, homodimer. Lamin dimers then assemble into dimeric head-to-tail polymers. Ultimately, two head-to-tail polymers assemble laterally into a protofilament with a uniformly shaped rod of 3.5 nm in diameter. Phosphorylation plays a key role in lamin organization, subcellular localization and nuclear envelope disintegration. Phosphorylation by CDK1 at Ser-16 at the onset of mitosis drives lamin disassembly and nuclear envelope breakdown.

The protein resides in the nucleus lamina. It is found in the nucleus envelope. It localises to the nucleus. The protein localises to the nucleoplasm. Its subcellular location is the nucleus matrix. Lamins are intermediate filament proteins that assemble into a filamentous meshwork, and which constitute the major components of the nuclear lamina, a fibrous layer on the nucleoplasmic side of the inner nuclear membrane. Lamins provide a framework for the nuclear envelope, bridging the nuclear envelope and chromatin. Plays an important role in nuclear assembly, chromatin organization, nuclear membrane and telomere dynamics. The sequence is that of Lamin-B2 (LMNB2) from Gallus gallus (Chicken).